A 246-amino-acid polypeptide reads, in one-letter code: Small ribosomal subunit protein uS2 (246 aa).

Belongs to the universal ribosomal protein uS2 family.

The chain is Small ribosomal subunit protein uS2 from Dictyoglomus turgidum (strain DSM 6724 / Z-1310).